We begin with the raw amino-acid sequence, 224 residues long: Dehydration-responsive element-binding protein 1G (224 aa).

Residues 1-16 are compositionally biased toward polar residues; sequence MDVSAALSSDYSSGTP. The tract at residues 1-46 is disordered; that stretch reads MDVSAALSSDYSSGTPSPVAADADDGSSAYMTVSSAPPKRRAGRTK. Residues 54-111 constitute a DNA-binding region (AP2/ERF); sequence VFKGVRRRNPGRWVCEVREPHGKQRIWLGTFETAEMAARAHDVAALALRGRAACLNFA.

Belongs to the AP2/ERF transcription factor family. ERF subfamily.

It is found in the nucleus. Transcriptional activator that binds specifically to the DNA sequence 5'-[AG]CCGAC-3'. Binding to the C-repeat/DRE element mediates high salinity- and dehydration-inducible transcription. The sequence is that of Dehydration-responsive element-binding protein 1G (DREB1G) from Oryza sativa subsp. indica (Rice).